The chain runs to 273 residues: Protein E6 (273 aa).

Zinc fingers lie at residues cysteine 27–cysteine 63 and cysteine 100–cysteine 140.

It belongs to the papillomaviridae E6 protein family. Forms homodimers. Interacts with ubiquitin-protein ligase UBE3A/E6-AP; this interaction stimulates UBE3A ubiquitin activity. Interacts with host BAK1.

Its subcellular location is the host cytoplasm. The protein resides in the host nucleus. Plays a major role in the induction and maintenance of cellular transformation. E6 associates with host UBE3A/E6-AP ubiquitin-protein ligase and modulates its activity. Protects host keratinocytes from apoptosis by mediating the degradation of host BAK1. May also inhibit host immune response. This is Protein E6 from Sylvilagus floridanus (Cottontail rabbit).